The chain runs to 128 residues: Sulfurtransferase TusD (128 aa).

The active-site Cysteine persulfide intermediate is Cys78.

This sequence belongs to the DsrE/TusD family. As to quaternary structure, heterohexamer, formed by a dimer of trimers. The hexameric TusBCD complex contains 2 copies each of TusB, TusC and TusD. The TusBCD complex interacts with TusE.

It is found in the cytoplasm. Functionally, part of a sulfur-relay system required for 2-thiolation of 5-methylaminomethyl-2-thiouridine (mnm(5)s(2)U) at tRNA wobble positions. Accepts sulfur from TusA and transfers it in turn to TusE. The sequence is that of Sulfurtransferase TusD from Shigella dysenteriae serotype 1 (strain Sd197).